The primary structure comprises 206 residues: Small ribosomal subunit protein uS4 (206 aa).

An S4 RNA-binding domain is found at 96–158 (SRLDNVVYRM…AKGQLRIKGA (63 aa)).

This sequence belongs to the universal ribosomal protein uS4 family. Part of the 30S ribosomal subunit. Contacts protein S5. The interaction surface between S4 and S5 is involved in control of translational fidelity.

Functionally, one of the primary rRNA binding proteins, it binds directly to 16S rRNA where it nucleates assembly of the body of the 30S subunit. Its function is as follows. With S5 and S12 plays an important role in translational accuracy. This is Small ribosomal subunit protein uS4 from Coxiella burnetii (strain CbuK_Q154) (Coxiella burnetii (strain Q154)).